Reading from the N-terminus, the 5142-residue chain is Protein piccolo (5142 aa).

Over residues 1–21 the composition is skewed to low complexity; it reads MGNEASLEGEGLPEGLAAAAA. Disordered stretches follow at residues 1-154 and 177-583; these read MGNE…SMMP and DLIS…PSQG. Composition is skewed to basic and acidic residues over residues 114-125, 136-150, and 188-202; these read RTTDTFRSEQKL, KESKSRTDLKEEHKS, and ETTKKQKVVQKEQGK. Positions 232–244 are enriched in polar residues; sequence QDGTPKSISSQQP. Composition is skewed to pro residues over residues 298–317 and 352–371; these read LPSPSKPPIQQPTPGKPPAQ and PVQPPGTTKPPAQPLGPAKP. Over residues 376–385 the composition is skewed to polar residues; sequence TGSEKPSSEQ. The segment at 397–555 is 10 X 10 AA tandem approximate repeats of P-A-K-P-Q-P-Q-Q-P-X; that stretch reads VGKTPAQQPG…PAKPSAQQST (159 aa). Residues 467 to 493 show a composition bias toward pro residues; sequence TKPPSQLPGPAKPPPQQPGPAKPPPQQ. Residues 494 to 506 are compositionally biased toward low complexity; it reads PGSAKPPSQQPGS. Over residues 507–522 the composition is skewed to pro residues; it reads TKPPPQQPGPAKPSPQ. Residues 523–554 show a composition bias toward low complexity; that stretch reads QPGSTKPPSQQPGSAKPSAQQPSPAKPSAQQS. The segment at 589 to 613 adopts a C4-type zinc-finger fold; sequence CPLCNTTELLLHVPEKANFNTCTEC. 2 disordered regions span residues 650-929 and 945-1058; these read LAPV…TVTG and LIST…PEST. Low complexity predominate over residues 673 to 683; it reads SKSSPQPQQTS. 2 stretches are compositionally biased toward basic and acidic residues: residues 684–702 and 743–755; these read PKKDAAPKQDLSKAPEPKK and EQDKAPVADDKPK. A compositionally biased stretch (polar residues) spans 765–774; that stretch reads DLVSSSSATT. A compositionally biased stretch (basic and acidic residues) spans 841-857; sequence KGQKQVDPVQKKEEPKK. Pro residues predominate over residues 873 to 882; it reads KGSPTPPGPR. Residues 889 to 927 show a composition bias toward polar residues; it reads VPTPQQSPKPQEQSRRFSLNLGSITDAPKSQPTTPQETV. Residues S906 and S918 each carry the phosphoserine modification. The residue at position 922 (T922) is a Phosphothreonine. Over residues 949 to 969 the composition is skewed to low complexity; sequence AGQPGPHSQSGPGAPMKQAPA. 2 stretches are compositionally biased toward basic and acidic residues: residues 996–1012 and 1019–1034; these read VKKETKAPAAEKLEPKA and KRTETEKKPPPIKDSK. The C4-type zinc finger occupies 1059–1082; it reads CPLCKTELNIGSKDPPNFNTCTEC. 4 disordered regions span residues 1120–1163, 1183–1386, 1391–1410, and 1423–1868; these read GDIR…QEQE, EKIP…TDEK, GLKKDSFSQESSPSSPSDLA, and QAST…SDPE. The span at 1126–1139 shows a compositional bias: pro residues; sequence PPAPSGPKASPMPV. Basic and acidic residues-rich tracts occupy residues 1193-1265, 1307-1318, and 1330-1347; these read QKQE…HDLL, PKEDDKTTKTIK, and DQVEPGKEKTEKEDDKSD. The segment covering 1348 to 1358 has biased composition (low complexity); that stretch reads TSSSQQPKSPQ. S1356, S1366, S1367, S1396, S1398, S1401, S1402, and S1405 each carry phosphoserine. The span at 1359 to 1374 shows a compositional bias: polar residues; the sequence is GLSDTGYSSDGISSSL. Low complexity predominate over residues 1398–1407; sequence SQESSPSSPS. Composition is skewed to basic and acidic residues over residues 1428-1451 and 1469-1510; these read ADEKSEKKTQPHEVSPEQPKDQEK and KESQ…REPY. Residues S1516, S1517, S1519, S1522, S1546, S1549, S1570, and S1572 each carry the phosphoserine modification. A compositionally biased stretch (acidic residues) spans 1564–1576; that stretch reads SADEDASGSEDDE. Phosphothreonine is present on T1617. Phosphoserine is present on residues S1618, S1628, and S1640. Acidic residues predominate over residues 1631 to 1640; the sequence is DEDDEAFDES. The segment covering 1641 to 1652 has biased composition (basic and acidic residues); it reads PELKYRETKSQE. A compositionally biased stretch (polar residues) spans 1671-1689; the sequence is ELNSTIADKYSAESSQKKT. Residues 1693–1703 are compositionally biased toward acidic residues; the sequence is FDEEPELEMES. Phosphoserine is present on S1703. The residue at position 1705 (T1705) is a Phosphothreonine. A phosphoserine mark is found at S1707 and S1712. Residues 1715-1732 show a composition bias toward polar residues; the sequence is EGSSSLHASSFTPGTSPT. Residues 1772-1785 show a composition bias toward acidic residues; it reads DSSEEEELREEEEL. 2 positions are modified to phosphoserine: S1773 and S1774. Residues 1786–1799 are compositionally biased toward basic and acidic residues; it reads LKEQEKQREIEQQQ. Position 1825 is a phosphothreonine (T1825). S1831 carries the post-translational modification Phosphoserine. Residues 1840–1855 are compositionally biased toward basic and acidic residues; that stretch reads EELRQAAEMEELHRSS. Residues S1860, S1865, S1873, and S1894 each carry the phosphoserine modification. Disordered stretches follow at residues 2169–2192, 2365–2438, and 2504–2536; these read PSESATSVPPSDTPSLTSSVSSVC, ETFG…PTIL, and EPSKPPIAPKPVIPQLPTTTQKPTDIHPKPTGL. Composition is skewed to low complexity over residues 2174 to 2192 and 2374 to 2387; these read TSVPPSDTPSLTSSVSSVC and SQLPSGSPSVSSLP. Composition is skewed to pro residues over residues 2404 to 2433 and 2506 to 2517; these read QPPPPPPPPPPPPPPPPPPPPPPLPPPTSP and SKPPIAPKPVIP. S2562 is subject to Phosphoserine. Residue T3069 is modified to Phosphothreonine. Disordered stretches follow at residues 3407 to 3508 and 3558 to 3626; these read EKQP…DKTK and KTYK…LYSP. Positions 3432–3441 are enriched in basic and acidic residues; sequence DDPRSFKKIV. S3443 bears the Phosphoserine mark. Phosphothreonine is present on residues T3447 and T3474. Positions 3474-3483 are enriched in acidic residues; it reads TDDEDQDEWD. Polar residues predominate over residues 3574-3585; the sequence is DTQSPQYLSATS. A phosphoserine mark is found at S3577, S3585, S3615, S3619, S3625, S3628, S3631, S3652, S3678, S3680, and S3686. 2 disordered regions span residues 3652 to 3746 and 3833 to 3908; these read SPQK…MGTV and YMSD…QQSH. 2 stretches are compositionally biased toward polar residues: residues 3701 to 3716 and 3733 to 3745; these read EGYTTKGSQTMTSSGA and STGTQSTFSTMGT. Residue S3835 is modified to Phosphoserine. Basic and acidic residues predominate over residues 3845–3857; sequence TRIESQHGIERPR. The segment covering 3859 to 3908 has biased composition (polar residues); the sequence is APQTEFSQFIPPQTQTESQLVPPTSPYTQYQYSSPALPTQAPTSYTQQSH. 2 positions are modified to phosphoserine: S4088 and S4204. The segment at 4278-4301 is disordered; sequence EADKPYSSGSRSRPSSRPSSVYGL. Positions 4282 to 4301 are enriched in low complexity; the sequence is PYSSGSRSRPSSRPSSVYGL. Residues S4358, S4362, S4365, S4394, and S4430 each carry the phosphoserine modification. Positions 4389-4411 are disordered; it reads RDQFGSSHSLPEVQQHMREESRT. The PDZ domain maps to 4496–4590; it reads RIKITRDSKD…EAEICVRLDL (95 aa). 2 disordered regions span residues 4597-4618 and 4645-4690; these read ENSQHLELHEPPKAVDKAKSPG and EKGS…TKVV. Residues 4598-4615 show a composition bias toward basic and acidic residues; sequence NSQHLELHEPPKAVDKAK. Residues 4652–4673 show a composition bias toward low complexity; that stretch reads SGPTSAGSSSVPSPGQPGSPSV. S4664 carries the post-translational modification Phosphoserine. The C2 1 domain maps to 4694 to 4823; that stretch reads ITGEIQLQIN…SHLDNTPRWY (130 aa). Ca(2+)-binding residues include D4723 and D4729. Position 4778 is a phosphoserine (S4778). The Ca(2+) site is built by D4793, D4795, S4798, and D4801. Disordered stretches follow at residues 4830–4907 and 4930–4986; these read ESID…VTQT and PTKP…QNGQ. Low complexity-rich tracts occupy residues 4838–4853 and 4877–4887; these read HSSQSSQQSPKPSVIK and SSPGSSKSSSE. Residues 4895-4907 are compositionally biased toward polar residues; sequence PSRSQSKTSVTQT. Residues 4941-4965 are compositionally biased toward low complexity; that stretch reads SSVSTGSSGSSFGSGYSVDSEGSSS. In terms of domain architecture, C2 2 spans 5007 to 5132; that stretch reads VMGEIKIALK…DLRKRIVNWH (126 aa).

Interacts with BSN, ERC2/CAST1, RIMS1 and UNC13A. Interacts (via C-terminus) with TRIO (via N-terminus). Interacts with CTBP1. Interacts with SIAH1; this interaction negatively regulates SIAH1 E3 ligase activity. Directly interacts with GIT1 and GIT2. Ca(2+) serves as cofactor. Moderately expressed in the developing cerebral cortex.

It is found in the presynaptic active zone. Scaffold protein of the presynaptic cytomatrix at the active zone (CAZ) which is the place in the synapse where neurotransmitter is released. After synthesis, participates in the formation of Golgi-derived membranous organelles termed Piccolo-Bassoon transport vesicles (PTVs) that are transported along axons to sites of nascent synaptic contacts. At the presynaptic active zone, regulates the spatial organization of synaptic vesicle cluster, the protein complexes that execute membrane fusion and compensatory endocytosis. Organizes as well the readily releasable pool of synaptic vesicles and safeguards a fraction of them to be not immediately available for action potential-induced release. Also functions in processes other than assembly such as the regulation of specific presynaptic protein ubiquitination by interacting with SIAH1 or the regulation of presynaptic autophagy. Also mediates synapse to nucleus communication leading to reconfiguration of gene expression by associating with the transcriptional corepressor CTBP1 and by subsequently reducing the size of its pool available for nuclear import. This Homo sapiens (Human) protein is Protein piccolo.